The sequence spans 90 residues: UPF0237 protein MMP0657 (90 aa).

In terms of domain architecture, ACT spans 5–79; it reads VITVVGVDKP…SEIGVKINVQ (75 aa).

This sequence belongs to the UPF0237 family.

The protein is UPF0237 protein MMP0657 of Methanococcus maripaludis (strain DSM 14266 / JCM 13030 / NBRC 101832 / S2 / LL).